Here is a 370-residue protein sequence, read N- to C-terminus: Proline-rich protein 5-like (370 aa).

Phosphoserine is present on Ser-28. 2 disordered regions span residues 312–346 (LGEE…LDSP) and 351–370 (LEDV…ASLS).

This sequence belongs to the PROTOR family. In terms of assembly, interacts with the mammalian target of rapamycin complex 2 (mTORC2) which contains MTOR, MLST8, PRR5, RICTOR, MAPKAP1 and DEPTOR. Interacts with RFFL. Interacts (via C-terminus) with ZFP36 (via C-terminus); this interaction may accelerate ZFP36-mediated mRNA decay during stress. Interacts with RICTOR. Post-translationally, ubiquitinated. Ubiquitination by RFFL promotes proteasomal degradation of PRR5L thereby modifying the substrate-specific activity of the mTORC2 complex. Ubiquitination by RFFL is stimulated by LPA/lysophosphatidic acid.

Associates with the mTORC2 complex that regulates cellular processes including survival and organization of the cytoskeleton. Regulates the activity of the mTORC2 complex in a substrate-specific manner preventing for instance the specific phosphorylation of PKCs and thereby controlling cell migration. Plays a role in the stimulation of ZFP36-mediated mRNA decay of several ZFP36-associated mRNAs, such as TNF-alpha and GM-CSF, in response to stress. Required for ZFP36 localization to cytoplasmic stress granule (SG) and P-body (PB) in response to stress. This Mus musculus (Mouse) protein is Proline-rich protein 5-like (Prr5l).